Here is a 694-residue protein sequence, read N- to C-terminus: Heat shock protein HSP 90-alpha (694 aa).

Residues Thr-5 and Thr-7 each carry the phosphothreonine; by PRKDC modification. Residues 9-236 (DQPMEEEEVE…DKEVSDDEAK (228 aa)) are interaction with NR3C1. Asn-51 is a binding site for ATP. 2 positions are modified to N6-acetyllysine: Lys-58 and Lys-84. The ATP site is built by Asp-93, Lys-112, and Phe-138. Over residues 228 to 241 (KEVSDDEAKQPDDK) the composition is skewed to basic and acidic residues. A disordered region spans residues 228-275 (KEVSDDEAKQPDDKPEIEDVGSDEEEEEKKDGDIDQEELNKTKPIWTR). Ser-231 and Ser-249 each carry phosphoserine. Residues 242 to 255 (PEIEDVGSDEEEEE) are compositionally biased toward acidic residues. Basic and acidic residues predominate over residues 256–268 (KKDGDIDQEELNK). Residues 258-578 (DGDIDQEELN…TANMERIMKA (321 aa)) form an interaction with NR3C1 region. The segment at 261–582 (IDQEELNKTK…ERIMKAQALR (322 aa)) is interaction with FNIP2 and TSC1. The tract at residues 261–694 (IDQEELNKTK…DDTSRMEEVD (434 aa)) is interaction with FLCN and FNIP1. A Phosphotyrosine modification is found at Tyr-289. Arg-376 serves as a coordination point for ATP. Lys-419 bears the N6-acetyllysine mark. Position 429 is a phosphoserine (Ser-429). Lys-434 is modified (N6-acetyllysine). Residue Ser-452 is modified to Phosphoserine. An N6-acetyllysine modification is found at Lys-465. Tyr-468 is subject to Phosphotyrosine. Residue Lys-547 is modified to N6-acetyllysine. S-nitrosocysteine is present on Cys-560. Positions 590 to 693 (MAAKKHLEVN…DDDTSRMEEV (104 aa)) are interaction with NR1D1. A Phosphoserine modification is found at Ser-603. Positions 644–694 (QTHANRIYRMIKLGLGIDEDDPTADDTAAAVTEEMPPLEGDDDTSRMEEVD) are required for homodimerization. The interval 662-694 (EDDPTADDTAAAVTEEMPPLEGDDDTSRMEEVD) is disordered. Over residues 668 to 677 (DDTAAAVTEE) the composition is skewed to low complexity. Positions 685–694 (DDTSRMEEVD) match the TPR repeat-binding motif. Positions 690 to 694 (MEEVD) are essential for interaction with SMYD3, TSC1 and STIP1/HOP. Positions 691-694 (EEVD) are essential for interaction with SGTA and TTC1.

It belongs to the heat shock protein 90 family. Homodimer. Identified in NR3C1/GCR steroid receptor-chaperone complexes formed at least by NR3C1, HSP90AA1 and a variety of proteins containing TPR repeats such as FKBP4, FKBP5, PPID, PPP5C or STIP1. Forms a complex containing HSP90AA1, TSC1 and TSC2; TSC1 is required to recruit TCS2 to the complex. The closed form interacts (via the middle domain and TPR repeat-binding motif) with co-chaperone TSC1 (via C-terminus). Interacts with TOM34. Interacts with TERT; the interaction, together with PTGES3, is required for correct assembly and stabilization of the TERT holoenzyme complex. Interacts with CHORDC1 and DNAJC7. Interacts with STUB1 and UBE2N; may couple the chaperone and ubiquitination systems. Interacts (via TPR repeat-binding motif) with PPP5C (via TPR repeats); the interaction is direct and activates PPP5C phosphatase activity. Following LPS binding, may form a complex with CXCR4, GDF5 and HSPA8. Interacts with KSR1. Interacts with co-chaperone CDC37 (via C-terminus); the interaction inhibits HSP90AA1 ATPase activity. May interact with NWD1. Interacts with FNIP1 and FNIP2; the interaction inhibits HSP90AA1 ATPase activity. Interacts with co-chaperone AHSA1 (phosphorylated on 'Tyr-223'); the interaction activates HSP90AA1 ATPase activity and results in the dissociation of TSC1 from HSP90AA1. Interacts with FLCN in the presence of FNIP1. Interacts with HSP70, STIP1 and PTGES3. Interacts with SMYD3; this interaction enhances SMYD3 histone-lysine N-methyltransferase. Interacts with SGTA (via TPR repeats). Interacts with TTC1 (via TPR repeats). Interacts with HSF1 in an ATP-dependent manner. Interacts with MET; the interaction suppresses MET kinase activity. Interacts with ERBB2 in an ATP-dependent manner; the interaction suppresses ERBB2 kinase activity. Interacts with HIF1A, KEAP1 and RHOBTB2. Interacts with HSF1; this interaction is decreased in a IER5-dependent manner, promoting HSF1 accumulation in the nucleus, homotrimerization and DNA-binding activities. Interacts with STUB1 and SMAD3. Interacts with HSP90AB1; interaction is constitutive. Interacts with HECTD1 (via N-terminus). Interacts with NR3C1 (via domain NR LBD) and NR1D1 (via domain NR LBD). Interacts with NLPR12. Interacts with PDCL3. Interacts with TOMM70; the interaction is required for preprotein mitochondrial import. Interacts with TOMM70, IRF3 and TBK1; the interactions are direct and mediate the association of TOMM70 with IRF3 and TBK1. Forms a complex with ASL, ASS1 and NOS2; the complex regulates cell-autonomous L-arginine synthesis and citrulline recycling while channeling extracellular L-arginine to nitric oxide synthesis pathway. Post-translationally, ISGylated. In terms of processing, S-nitrosylated; negatively regulates the ATPase activity and the activation of eNOS by HSP90AA1. Ubiquitinated via 'Lys-63'-linked polyubiquitination by HECTD1. Ubiquitination promotes translocation into the cytoplasm away from the membrane and secretory pathways.

It localises to the nucleus. It is found in the cytoplasm. The protein localises to the melanosome. Its subcellular location is the cell membrane. The protein resides in the mitochondrion. It carries out the reaction ATP + H2O = ADP + phosphate + H(+). In the resting state, through the dimerization of its C-terminal domain, HSP90 forms a homodimer which is defined as the open conformation. Upon ATP-binding, the N-terminal domain undergoes significant conformational changes and comes in contact to form an active closed conformation. After HSP90 finishes its chaperoning tasks of assisting the proper folding, stabilization and activation of client proteins under the active state, ATP molecule is hydrolyzed to ADP which then dissociates from HSP90 and directs the protein back to the resting state. Co-chaperone TSC1 promotes ATP binding and inhibits HSP90AA1 ATPase activity. Binding to phosphorylated AHSA1 promotes HSP90AA1 ATPase activity. Inhibited by geldanamycin, Ganetespib (STA-9090) and SNX-2112. Molecular chaperone that promotes the maturation, structural maintenance and proper regulation of specific target proteins involved for instance in cell cycle control and signal transduction. Undergoes a functional cycle that is linked to its ATPase activity which is essential for its chaperone activity. This cycle probably induces conformational changes in the client proteins, thereby causing their activation. Interacts dynamically with various co-chaperones that modulate its substrate recognition, ATPase cycle and chaperone function. Engages with a range of client protein classes via its interaction with various co-chaperone proteins or complexes, that act as adapters, simultaneously able to interact with the specific client and the central chaperone itself. Recruitment of ATP and co-chaperone followed by client protein forms a functional chaperone. After the completion of the chaperoning process, properly folded client protein and co-chaperone leave HSP90 in an ADP-bound partially open conformation and finally, ADP is released from HSP90 which acquires an open conformation for the next cycle. Plays a critical role in mitochondrial import, delivers preproteins to the mitochondrial import receptor TOMM70. Apart from its chaperone activity, it also plays a role in the regulation of the transcription machinery. HSP90 and its co-chaperones modulate transcription at least at three different levels. In the first place, they alter the steady-state levels of certain transcription factors in response to various physiological cues. Second, they modulate the activity of certain epigenetic modifiers, such as histone deacetylases or DNA methyl transferases, and thereby respond to the change in the environment. Third, they participate in the eviction of histones from the promoter region of certain genes and thereby turn on gene expression. Binds bacterial lipopolysaccharide (LPS) and mediates LPS-induced inflammatory response, including TNF secretion by monocytes. Antagonizes STUB1-mediated inhibition of TGF-beta signaling via inhibition of STUB1-mediated SMAD3 ubiquitination and degradation. Mediates the association of TOMM70 with IRF3 or TBK1 in mitochondrial outer membrane which promotes host antiviral response. This chain is Heat shock protein HSP 90-alpha (HSP90AA1), found in Oryctolagus cuniculus (Rabbit).